The primary structure comprises 306 residues: D-alanine--D-alanine ligase B (306 aa).

The ATP-grasp domain occupies 101 to 303 (KLLWQGAGLP…FSQLVVRILE (203 aa)). Residue 134-189 (ISALGLPVIVKPSREGSSVGMSKVVAENALQDALRLAFQHDEEVLIEKWLSGPEFT) participates in ATP binding. Asp257, Glu270, and Asn272 together coordinate Mg(2+).

It belongs to the D-alanine--D-alanine ligase family. The cofactor is Mg(2+). It depends on Mn(2+) as a cofactor.

It localises to the cytoplasm. The enzyme catalyses 2 D-alanine + ATP = D-alanyl-D-alanine + ADP + phosphate + H(+). It functions in the pathway cell wall biogenesis; peptidoglycan biosynthesis. Its function is as follows. Cell wall formation. The protein is D-alanine--D-alanine ligase B of Shigella flexneri.